The following is a 158-amino-acid chain: Transcription elongation factor GreB (158 aa).

Residues 53–75 adopt a coiled-coil conformation; that stretch reads KRRLREIDRRVRFLTKRLEVLQI.

This sequence belongs to the GreA/GreB family. GreB subfamily.

Functionally, necessary for efficient RNA polymerase transcription elongation past template-encoded arresting sites. The arresting sites in DNA have the property of trapping a certain fraction of elongating RNA polymerases that pass through, resulting in locked ternary complexes. Cleavage of the nascent transcript by cleavage factors such as GreA or GreB allows the resumption of elongation from the new 3'terminus. GreB releases sequences of up to 9 nucleotides in length. This is Transcription elongation factor GreB from Pasteurella multocida (strain Pm70).